Consider the following 471-residue polypeptide: Ribulose bisphosphate carboxylase large chain (471 aa).

Asn-115 and Thr-165 together coordinate substrate. The active-site Proton acceptor is Lys-167. Lys-169 serves as a coordination point for substrate. Lys-193, Asp-195, and Glu-196 together coordinate Mg(2+). The residue at position 193 (Lys-193) is an N6-carboxylysine. His-286 (proton acceptor) is an active-site residue. 3 residues coordinate substrate: Arg-287, His-319, and Ser-371.

The protein belongs to the RuBisCO large chain family. Type I subfamily. Heterohexadecamer of 8 large chains and 8 small chains. Requires Mg(2+) as cofactor.

The protein localises to the carboxysome. It catalyses the reaction 2 (2R)-3-phosphoglycerate + 2 H(+) = D-ribulose 1,5-bisphosphate + CO2 + H2O. The enzyme catalyses D-ribulose 1,5-bisphosphate + O2 = 2-phosphoglycolate + (2R)-3-phosphoglycerate + 2 H(+). In terms of biological role, ruBisCO catalyzes two reactions: the carboxylation of D-ribulose 1,5-bisphosphate, the primary event in carbon dioxide fixation, as well as the oxidative fragmentation of the pentose substrate in the photorespiration process. Both reactions occur simultaneously and in competition at the same active site. The chain is Ribulose bisphosphate carboxylase large chain from Synechococcus sp. (strain CC9605).